Reading from the N-terminus, the 176-residue chain is 2-C-methyl-D-erythritol 2,4-cyclodiphosphate synthase (176 aa).

2 residues coordinate a divalent metal cation: Asp22 and His24. Residues 22 to 24 (DVH) and 48 to 49 (HS) contribute to the 4-CDP-2-C-methyl-D-erythritol 2-phosphate site. His56 is a binding site for a divalent metal cation. 4-CDP-2-C-methyl-D-erythritol 2-phosphate contacts are provided by residues 70 to 72 (DIG), 146 to 149 (TTSE), Phe153, and Arg156.

The protein belongs to the IspF family. In terms of assembly, homotrimer. The cofactor is a divalent metal cation.

It catalyses the reaction 4-CDP-2-C-methyl-D-erythritol 2-phosphate = 2-C-methyl-D-erythritol 2,4-cyclic diphosphate + CMP. It functions in the pathway isoprenoid biosynthesis; isopentenyl diphosphate biosynthesis via DXP pathway; isopentenyl diphosphate from 1-deoxy-D-xylulose 5-phosphate: step 4/6. Functionally, involved in the biosynthesis of isopentenyl diphosphate (IPP) and dimethylallyl diphosphate (DMAPP), two major building blocks of isoprenoid compounds. Catalyzes the conversion of 4-diphosphocytidyl-2-C-methyl-D-erythritol 2-phosphate (CDP-ME2P) to 2-C-methyl-D-erythritol 2,4-cyclodiphosphate (ME-CPP) with a corresponding release of cytidine 5-monophosphate (CMP). This Xylella fastidiosa (strain 9a5c) protein is 2-C-methyl-D-erythritol 2,4-cyclodiphosphate synthase.